Consider the following 287-residue polypeptide: Small ribosomal subunit biogenesis GTPase RsgA (287 aa).

Positions S61 to L218 constitute a CP-type G domain. GTP contacts are provided by residues N110 to D113 and G161 to T169. Positions 242, 247, 249, and 255 each coordinate Zn(2+).

The protein belongs to the TRAFAC class YlqF/YawG GTPase family. RsgA subfamily. As to quaternary structure, monomer. Associates with 30S ribosomal subunit, binds 16S rRNA. Requires Zn(2+) as cofactor.

The protein localises to the cytoplasm. Functionally, one of several proteins that assist in the late maturation steps of the functional core of the 30S ribosomal subunit. Helps release RbfA from mature subunits. May play a role in the assembly of ribosomal proteins into the subunit. Circularly permuted GTPase that catalyzes slow GTP hydrolysis, GTPase activity is stimulated by the 30S ribosomal subunit. The chain is Small ribosomal subunit biogenesis GTPase RsgA from Clostridium perfringens (strain 13 / Type A).